Reading from the N-terminus, the 394-residue chain is uncharacterized protein (394 aa).

Helical transmembrane passes span 10-30 (PALI…NYYA), 50-70 (FIVT…VPLG), 79-99 (IVSM…SQSL), 100-120 (AMMI…QILV), 138-158 (TIMS…GLLA), 166-186 (VFWV…RGLP), 218-238 (LLGC…AFLL), 243-263 (FNYS…GALG), 291-311 (WLAI…ILVL), 337-357 (LTAG…LISA), and 364-384 (GWAG…LVWW).

Belongs to the major facilitator superfamily.

It is found in the cell inner membrane. This is an uncharacterized protein from Escherichia coli O157:H7.